Reading from the N-terminus, the 36-residue chain is LFCRKGTCHFGGCPAHLVKVGSCFGFRACCKWPWDV.

Disulfide bonds link C3–C29, C8–C23, and C13–C30.

The protein localises to the secreted. Has antibacterial activity against the Gram-positive bacteria S.aureus 1056 MRSA (MIC=1.25 ug/ml) and S.aureus NCTC 4163 (MIC=6.7 ug/ml), and the Gram-negative bacteria E.coli O157:H7 (MIC=0.96 ug/ml) and E.coli 0111 (MIC=6.7 ug/ml). Does not have antifungal activity against the yeast C.albicans 3153A. The sequence is that of Ostricacin-1 from Struthio camelus (Common ostrich).